The following is a 539-amino-acid chain: Probable malate:quinone oxidoreductase 3 (539 aa).

The tract at residues 516–539 (LEPPVSPQRPESIRPADSQGVASR) is disordered.

The protein belongs to the MQO family. The cofactor is FAD.

The enzyme catalyses (S)-malate + a quinone = a quinol + oxaloacetate. Its pathway is carbohydrate metabolism; tricarboxylic acid cycle; oxaloacetate from (S)-malate (quinone route): step 1/1. The polypeptide is Probable malate:quinone oxidoreductase 3 (Pseudomonas putida (strain ATCC 47054 / DSM 6125 / CFBP 8728 / NCIMB 11950 / KT2440)).